The primary structure comprises 434 residues: Probable phosphoglucosamine mutase (434 aa).

Catalysis depends on Ser-91, which acts as the Phosphoserine intermediate. Mg(2+) is bound by residues Ser-91, Asp-229, Asp-231, and Asp-233. At Ser-91 the chain carries Phosphoserine.

Belongs to the phosphohexose mutase family. Mg(2+) serves as cofactor. Activated by phosphorylation.

It catalyses the reaction alpha-D-glucosamine 1-phosphate = D-glucosamine 6-phosphate. Its function is as follows. Catalyzes the conversion of glucosamine-6-phosphate to glucosamine-1-phosphate. The protein is Probable phosphoglucosamine mutase of Methanosarcina barkeri (strain Fusaro / DSM 804).